A 599-amino-acid chain; its full sequence is Putative sensor histidine kinase NtrY-like (599 aa).

Transmembrane regions (helical) follow at residues 17–37, 44–64, 85–105, and 285–305; these read ILIL…FYVI, FSTI…LGIL, IVIA…VFSV, and IMFI…GVLF. In terms of domain architecture, HAMP spans 307 to 361; it reads AQIVKPIKKLVTATDKVKDGDLTVQVPENEVDKDEIGTLYVAFNRMIKQLSRQQR. A Histidine kinase domain is found at 378-589; that stretch reads KVAHEIKNPL…IIDIKFDLKE (212 aa). His-381 bears the Phosphohistidine; by autocatalysis mark.

It localises to the cell membrane. The catalysed reaction is ATP + protein L-histidine = ADP + protein N-phospho-L-histidine.. Functionally, member of the two-component regulatory system RT0603/RT0550. The polypeptide is Putative sensor histidine kinase NtrY-like (Rickettsia typhi (strain ATCC VR-144 / Wilmington)).